A 276-amino-acid chain; its full sequence is 4-hydroxy-tetrahydrodipicolinate reductase (276 aa).

Residues 18–23 (GASGRM) and Asp44 contribute to the NAD(+) site. Arg45 lines the NADP(+) pocket. Residues 107–109 (GTT) and 131–134 (APNM) contribute to the NAD(+) site. His164 acts as the Proton donor/acceptor in catalysis. His165 contributes to the (S)-2,3,4,5-tetrahydrodipicolinate binding site. Lys168 serves as the catalytic Proton donor. 174–175 (GT) is a binding site for (S)-2,3,4,5-tetrahydrodipicolinate.

It belongs to the DapB family.

Its subcellular location is the cytoplasm. It catalyses the reaction (S)-2,3,4,5-tetrahydrodipicolinate + NAD(+) + H2O = (2S,4S)-4-hydroxy-2,3,4,5-tetrahydrodipicolinate + NADH + H(+). The catalysed reaction is (S)-2,3,4,5-tetrahydrodipicolinate + NADP(+) + H2O = (2S,4S)-4-hydroxy-2,3,4,5-tetrahydrodipicolinate + NADPH + H(+). It functions in the pathway amino-acid biosynthesis; L-lysine biosynthesis via DAP pathway; (S)-tetrahydrodipicolinate from L-aspartate: step 4/4. Its function is as follows. Catalyzes the conversion of 4-hydroxy-tetrahydrodipicolinate (HTPA) to tetrahydrodipicolinate. This is 4-hydroxy-tetrahydrodipicolinate reductase from Aromatoleum aromaticum (strain DSM 19018 / LMG 30748 / EbN1) (Azoarcus sp. (strain EbN1)).